The chain runs to 1230 residues: SAM and SH3 domain-containing protein 1 (1230 aa).

The segment covering 1-10 has biased composition (low complexity); sequence MEEDAGAASP. Positions 1-30 are disordered; the sequence is MEEDAGAASPAPEPEPEVDPARELEPEAGV. 2 positions are modified to phosphoserine: Ser-83 and Ser-241. Disordered regions lie at residues 211–249 and 275–337; these read RQSS…EDSV and KKPS…LDTW. Residues 275–297 show a composition bias toward basic and acidic residues; it reads KKPSAEGGEEHVFENSPVQDERS. The segment covering 324 to 336 has biased composition (low complexity); it reads SLTPSPSSSSLDT. At Ser-400 the chain carries Phosphoserine. Disordered regions lie at residues 439 to 566, 610 to 633, and 705 to 792; these read PRIS…YDTD, EEKP…SVED, and VDNQ…KSCD. A compositionally biased stretch (polar residues) spans 461–470; that stretch reads KYSSPVSEQD. A compositionally biased stretch (basic and acidic residues) spans 485–494; it reads PDSEHVDKPK. Residues 498–516 show a composition bias toward low complexity; the sequence is GGSVESLRSSLSGQSSMSG. Residues 517 to 529 show a composition bias toward polar residues; that stretch reads QTVSTTDSSTSNR. Residues 547-608 form the SH3 domain; it reads PFCGRARVHT…KFIYVDVLNE (62 aa). Basic residues predominate over residues 615 to 624; the sequence is RPTRRRKKGR. One can recognise an SAM 1 domain in the interval 626 to 690; it reads SQPKSVEDLL…LTAVELLQEY (65 aa). Residues 737-758 show a composition bias toward polar residues; sequence VLSTKSSTESNLKSFTRSQPGN. Residues 768–779 show a composition bias toward basic and acidic residues; that stretch reads GEVRKQGEEGRL. Phosphoserine is present on residues Ser-813 and Ser-831. Disordered stretches follow at residues 818-875 and 915-1045; these read EGPE…LPRG and PPQC…PWLA. The segment at 844–852 is required for interaction with TRAF6; sequence NVPTEMPET. The span at 852–868 shows a compositional bias: polar residues; sequence TCSQNVPEVPQKTSACT. A compositionally biased stretch (basic and acidic residues) spans 940 to 956; sequence GLRKGHDHHPLGTKEGV. Residues 962 to 972 show a composition bias toward polar residues; sequence APETRTQSRHP. The segment covering 1008–1019 has biased composition (low complexity); sequence SPASPVSPSDCP. Residues 1160–1224 form the SAM 2 domain; it reads GCVASMSDWL…ITAARLFKLP (65 aa).

As to quaternary structure, interacts with GNAS. Interacts with IQGAP1. Interacts with TRAF6 (via C-terminus); the interaction is LPS-dependent. Interacts with MAP3K7, CHUK and IKBKB. As to expression, expressed in the microvascular endothelium of various organs, as well as in parenchymal cells. Expressed in the endothelium but not lymphoid cells of spleen and thymus.

Its subcellular location is the cytoplasm. Its function is as follows. Is a positive regulator of NF-kappa-B signaling downstream of TLR4 activation. It acts as a scaffold molecule to assemble a molecular complex that includes TRAF6, MAP3K7, CHUK and IKBKB, thereby facilitating NF-kappa-B signaling activation. Regulates TRAF6 and MAP3K7 ubiquitination. Involved in the regulation of cell mobility. Regulates lipolysaccharide (LPS)-induced endothelial cell migration. Is involved in the regulation of skin pigmentation through the control of melanocyte migration in the epidermis. This is SAM and SH3 domain-containing protein 1 (Sash1) from Mus musculus (Mouse).